A 353-amino-acid chain; its full sequence is tRNA-specific 2-thiouridylase MnmA 1 (353 aa).

Residues 9–16 (AMSGGVDS) and Met-35 each bind ATP. Cys-98 acts as the Nucleophile in catalysis. Cys-98 and Cys-194 are oxidised to a cystine. Residue Gly-122 participates in ATP binding. The segment at 144 to 146 (KDQ) is interaction with tRNA. Cys-194 acts as the Cysteine persulfide intermediate in catalysis. Positions 300-301 (RY) are interaction with tRNA.

This sequence belongs to the MnmA/TRMU family.

The protein localises to the cytoplasm. It carries out the reaction S-sulfanyl-L-cysteinyl-[protein] + uridine(34) in tRNA + AH2 + ATP = 2-thiouridine(34) in tRNA + L-cysteinyl-[protein] + A + AMP + diphosphate + H(+). Functionally, catalyzes the 2-thiolation of uridine at the wobble position (U34) of tRNA, leading to the formation of s(2)U34. The sequence is that of tRNA-specific 2-thiouridylase MnmA 1 from Clostridium botulinum (strain Okra / Type B1).